The chain runs to 171 residues: Auxin-responsive protein IAA33 (171 aa).

2 stretches are compositionally biased toward polar residues: residues 1-11 and 19-32; these read MNSFEPQSQDS and DNST…TTTP. The segment at 1-51 is disordered; that stretch reads MNSFEPQSQDSLQRRFHQDNSTTQQPRDTTTPFIPKPASKNHNNSNSSSGA. The span at 40–49 shows a compositional bias: low complexity; that stretch reads KNHNNSNSSS. A PB1 domain is found at 72–162; it reads VPPVTVVLEG…KRIRILPVKG (91 aa).

The protein belongs to the Aux/IAA family. As to quaternary structure, homodimers and heterodimers.

It is found in the nucleus. Aux/IAA proteins are short-lived transcriptional factors that function as repressors of early auxin response genes at low auxin concentrations. Repression is thought to result from the interaction with auxin response factors (ARFs), proteins that bind to the auxin-responsive promoter element (AuxRE). Formation of heterodimers with ARF proteins may alter their ability to modulate early auxin response genes expression. The chain is Auxin-responsive protein IAA33 (IAA33) from Arabidopsis thaliana (Mouse-ear cress).